A 166-amino-acid polypeptide reads, in one-letter code: ATP synthase subunit b (166 aa).

The chain crosses the membrane as a helical span at residues 10 to 30 (LLFWMVIVFGIVFVILAKYGF).

It belongs to the ATPase B chain family. As to quaternary structure, F-type ATPases have 2 components, F(1) - the catalytic core - and F(0) - the membrane proton channel. F(1) has five subunits: alpha(3), beta(3), gamma(1), delta(1), epsilon(1). F(0) has three main subunits: a(1), b(2) and c(10-14). The alpha and beta chains form an alternating ring which encloses part of the gamma chain. F(1) is attached to F(0) by a central stalk formed by the gamma and epsilon chains, while a peripheral stalk is formed by the delta and b chains.

It localises to the cell inner membrane. F(1)F(0) ATP synthase produces ATP from ADP in the presence of a proton or sodium gradient. F-type ATPases consist of two structural domains, F(1) containing the extramembraneous catalytic core and F(0) containing the membrane proton channel, linked together by a central stalk and a peripheral stalk. During catalysis, ATP synthesis in the catalytic domain of F(1) is coupled via a rotary mechanism of the central stalk subunits to proton translocation. Its function is as follows. Component of the F(0) channel, it forms part of the peripheral stalk, linking F(1) to F(0). This chain is ATP synthase subunit b, found in Phocaeicola vulgatus (strain ATCC 8482 / DSM 1447 / JCM 5826 / CCUG 4940 / NBRC 14291 / NCTC 11154) (Bacteroides vulgatus).